Reading from the N-terminus, the 505-residue chain is Megakaryocyte-associated tyrosine-protein kinase (505 aa).

Residues 46-108 enclose the SH3 domain; sequence APGTQCMTKC…AAAALRHGEA (63 aa). The region spanning 120-209 is the SH2 domain; that stretch reads WFHGKISGQE…AICTKLVKPR (90 aa). The Protein kinase domain occupies 233–481; the sequence is LTLGAQIGEG…IVEKLGRELR (249 aa). ATP is bound by residues 239–247 and Lys-260; that span reads IGEGEFGAV. Asp-350 serves as the catalytic Proton acceptor. The interval 483–505 is disordered; it reads VGVSAPAGGQEAEGSAPTRSQDP.

The protein belongs to the protein kinase superfamily. Tyr protein kinase family. CSK subfamily. As to quaternary structure, interacts with KIT. As to expression, most abundant in brain, and to a lesser extent in the spleen, the thymus and the liver. Also found in the T-cell lineage.

It localises to the cytoplasm. The protein resides in the membrane. It catalyses the reaction L-tyrosyl-[protein] + ATP = O-phospho-L-tyrosyl-[protein] + ADP + H(+). In terms of biological role, could play a significant role in the signal transduction of hematopoietic cells. May regulate tyrosine kinase activity of SRC-family members in brain by specifically phosphorylating their C-terminal regulatory tyrosine residue which acts as a negative regulatory site. It may play an inhibitory role in the control of T-cell proliferation. In Mus musculus (Mouse), this protein is Megakaryocyte-associated tyrosine-protein kinase (Matk).